The sequence spans 78 residues: Calcium/calmodulin-dependent protein kinase II inhibitor 1 (78 aa).

The segment at 41 to 68 (SKRPPKLGQIGRSKRVVIEDDRIDDVLK) is CAMK2 inhibitory domain.

It belongs to the CAMK2N family. As to quaternary structure, interacts with CAMK2B; the presence of Ca(2+)/calmodulin increases the interaction but is not essential. Interacts with CAMK2A; this interaction requires CAMK2A activation by Ca(2+). Expressed in the brain (at protein level). Expressed in cardiomyocytes but not cardiac fibroblasts (at protein level).

It localises to the synapse. The protein resides in the cell projection. The protein localises to the dendrite. It is found in the postsynaptic density. In terms of biological role, potent and specific inhibitor of CaM-kinase II (CAMK2). Plays a role in the maintenance of long-term retrieval-induced memory in response to contextual fear. Modulates blood pressure and vascular reactivity via regulation of CAMK2 activity in addition to regulation of left ventricular mass. Mediates the NLRP3 inflammasome in cardiomyocytes via acting as an inhibitor of the MAPK14/p38 and MAPK8/JNK pathways, thereby regulating ventricular remodeling and cardiac rhythm post-myocardial infarction. Negatively effects insulin sensitivity and promotes lipid formation in adipose tissues independent of CAMK2 signaling. The sequence is that of Calcium/calmodulin-dependent protein kinase II inhibitor 1 (Camk2n1) from Mus musculus (Mouse).